A 327-amino-acid chain; its full sequence is Putative HTH-type transcriptional regulatory protein MmarC6_0210 (327 aa).

The region spanning 128 to 183 (LRETREKLKISVGELAEISRVSRKTIYKYEQNEANPSAEVAIKIEEYLDVPLIKGI) is the HTH cro/C1-type domain. A DNA-binding region (H-T-H motif) is located at residues 139 to 158 (VGELAEISRVSRKTIYKYEQ).

The chain is Putative HTH-type transcriptional regulatory protein MmarC6_0210 from Methanococcus maripaludis (strain C6 / ATCC BAA-1332).